Consider the following 239-residue polypeptide: Protein UL20 homolog (239 aa).

A run of 3 helical transmembrane segments spans residues 65–81, 140–156, and 189–208; these read PSFS…ALVI, FVIG…FMVV, and LMPL…STAV.

Belongs to the alphaherpesvirinae UL20 family. Interacts with gK (via N-terminus); this interaction plays a role in the coordinate transport of UL20 and gK to the trans-Golgi network (TGN), and is required for their cell surface expression. Interacts with gB.

The protein resides in the virion. Its subcellular location is the host cell membrane. The protein localises to the host endosome membrane. It localises to the host Golgi apparatus membrane. It is found in the host nucleus membrane. Plays an essential role in egress of virus particles from the nucleus, cytoplasmic envelopment and virus-induced cell fusion. Forms a functional protein complex with gK and this interaction is absolutely essential for their coordinate intracellular transport, gK glycosylation, expression on host cell surface, and function. Together, they modulate gB-mediated virus-induced cell fusion and virion egress and therefore actively participate in these processes. The polypeptide is Protein UL20 homolog (Equus caballus (Horse)).